Reading from the N-terminus, the 89-residue chain is Peroxidase (89 aa).

H52 contacts heme. Residues T53 and D68 each coordinate Ca(2+).

It depends on heme b as a cofactor. Ca(2+) is required as a cofactor.

Its subcellular location is the secreted. The catalysed reaction is 2 a phenolic donor + H2O2 = 2 a phenolic radical donor + 2 H2O. Removal of H(2)O(2), oxidation of toxic reductants, biosynthesis and degradation of lignin, suberization, auxin catabolism, response to environmental stresses such as wounding, pathogen attack and oxidative stress. These functions might be dependent on each isozyme/isoform in each plant tissue. Active against p-coumaryl alcohol, coniferyl alcohol and coniferyl aldehyde. In Ginkgo biloba (Ginkgo), this protein is Peroxidase.